We begin with the raw amino-acid sequence, 750 residues long: Photosystem I P700 chlorophyll a apoprotein A1 (750 aa).

8 helical membrane passes run 70–93 (VFSA…FHGA), 156–179 (LYCT…FHYH), 195–219 (LNHH…HVSL), 291–309 (IVHH…GHMY), 346–369 (WHAQ…HHMY), 385–411 (LSLF…IFMV), 433–455 (AIIS…LYIH), and 531–549 (FLVH…LILL). [4Fe-4S] cluster is bound by residues Cys573 and Cys582. Transmembrane regions (helical) follow at residues 589 to 610 (HVFL…HFSW) and 664 to 686 (LSAY…MFLF). A chlorophyll a'-binding site is contributed by His675. The chlorophyll a site is built by Met683 and Tyr691. Trp692 lines the phylloquinone pocket. Residues 724 to 744 (AVGVTHYLLGGIATTWAFFLA) traverse the membrane as a helical segment.

This sequence belongs to the PsaA/PsaB family. As to quaternary structure, the PsaA/B heterodimer binds the P700 chlorophyll special pair and subsequent electron acceptors. PSI consists of a core antenna complex that captures photons, and an electron transfer chain that converts photonic excitation into a charge separation. The eukaryotic PSI reaction center is composed of at least 11 subunits. The cofactor is P700 is a chlorophyll a/chlorophyll a' dimer, A0 is one or more chlorophyll a, A1 is one or both phylloquinones and FX is a shared 4Fe-4S iron-sulfur center..

Its subcellular location is the plastid. The protein localises to the chloroplast thylakoid membrane. The enzyme catalyses reduced [plastocyanin] + hnu + oxidized [2Fe-2S]-[ferredoxin] = oxidized [plastocyanin] + reduced [2Fe-2S]-[ferredoxin]. Functionally, psaA and PsaB bind P700, the primary electron donor of photosystem I (PSI), as well as the electron acceptors A0, A1 and FX. PSI is a plastocyanin-ferredoxin oxidoreductase, converting photonic excitation into a charge separation, which transfers an electron from the donor P700 chlorophyll pair to the spectroscopically characterized acceptors A0, A1, FX, FA and FB in turn. Oxidized P700 is reduced on the lumenal side of the thylakoid membrane by plastocyanin. This chain is Photosystem I P700 chlorophyll a apoprotein A1, found in Piper cenocladum (Ant piper).